The sequence spans 250 residues: 1-(5-phosphoribosyl)-5-[(5-phosphoribosylamino)methylideneamino] imidazole-4-carboxamide isomerase (250 aa).

Aspartate 8 serves as the catalytic Proton acceptor. Aspartate 131 functions as the Proton donor in the catalytic mechanism.

The protein belongs to the HisA/HisF family.

Its subcellular location is the cytoplasm. The catalysed reaction is 1-(5-phospho-beta-D-ribosyl)-5-[(5-phospho-beta-D-ribosylamino)methylideneamino]imidazole-4-carboxamide = 5-[(5-phospho-1-deoxy-D-ribulos-1-ylimino)methylamino]-1-(5-phospho-beta-D-ribosyl)imidazole-4-carboxamide. The protein operates within amino-acid biosynthesis; L-histidine biosynthesis; L-histidine from 5-phospho-alpha-D-ribose 1-diphosphate: step 4/9. The protein is 1-(5-phosphoribosyl)-5-[(5-phosphoribosylamino)methylideneamino] imidazole-4-carboxamide isomerase of Paraburkholderia phytofirmans (strain DSM 17436 / LMG 22146 / PsJN) (Burkholderia phytofirmans).